A 64-amino-acid polypeptide reads, in one-letter code: Putative neurotoxin-G (64 aa).

The N-terminal stretch at 1 to 19 (MFAMVTVTVLLLISSGIFC) is a signal peptide. Disulfide bonds link Cys-25/Cys-45, Cys-32/Cys-54, and Cys-36/Cys-56.

As to expression, expressed by the venom gland.

Its subcellular location is the secreted. The polypeptide is Putative neurotoxin-G (Lychas mucronatus (Chinese swimming scorpion)).